The sequence spans 165 residues: Neurotrophin-3 (165 aa).

The signal sequence occupies residues 1-3; the sequence is IQS. Positions 4-119 are excised as a propeptide; it reads TSMDQGSLSE…VLNRTSRRKR (116 aa). Asparagine 112 carries N-linked (GlcNAc...) asparagine glycosylation.

Belongs to the NGF-beta family.

The protein resides in the secreted. Functionally, seems to promote the survival of visceral and proprioceptive sensory neurons. This Anilius scytale (Coral cylinder snake) protein is Neurotrophin-3 (NTF3).